Consider the following 388-residue polypeptide: 3-ketoacyl-CoA thiolase (388 aa).

Cys-91 (acyl-thioester intermediate) is an active-site residue. Residues His-343 and Cys-373 each act as proton acceptor in the active site.

The protein belongs to the thiolase-like superfamily. Thiolase family. Heterotetramer of two alpha chains (FadB) and two beta chains (FadA).

The protein resides in the cytoplasm. The catalysed reaction is an acyl-CoA + acetyl-CoA = a 3-oxoacyl-CoA + CoA. It participates in lipid metabolism; fatty acid beta-oxidation. Catalyzes the final step of fatty acid oxidation in which acetyl-CoA is released and the CoA ester of a fatty acid two carbons shorter is formed. This is 3-ketoacyl-CoA thiolase from Photorhabdus laumondii subsp. laumondii (strain DSM 15139 / CIP 105565 / TT01) (Photorhabdus luminescens subsp. laumondii).